The following is a 432-amino-acid chain: Adenylosuccinate synthetase (432 aa).

Residues 13–19 (GDEGKGK) and 41–43 (GHT) each bind GTP. Residue Asp14 is the Proton acceptor of the active site. 2 residues coordinate Mg(2+): Asp14 and Gly41. Residues 14-17 (DEGK), 39-42 (NAGH), Thr130, Arg144, Gln225, Thr240, and Arg304 each bind IMP. His42 functions as the Proton donor in the catalytic mechanism. 300–306 (AVTGRPR) contributes to the substrate binding site. Residues Arg306, 332-334 (KLD), and 415-417 (STG) each bind GTP.

Belongs to the adenylosuccinate synthetase family. Homodimer. It depends on Mg(2+) as a cofactor.

It localises to the cytoplasm. The catalysed reaction is IMP + L-aspartate + GTP = N(6)-(1,2-dicarboxyethyl)-AMP + GDP + phosphate + 2 H(+). It participates in purine metabolism; AMP biosynthesis via de novo pathway; AMP from IMP: step 1/2. In terms of biological role, plays an important role in the de novo pathway of purine nucleotide biosynthesis. Catalyzes the first committed step in the biosynthesis of AMP from IMP. This Haemophilus influenzae (strain ATCC 51907 / DSM 11121 / KW20 / Rd) protein is Adenylosuccinate synthetase.